Consider the following 243-residue polypeptide: MHPIRCEAVVLATMDYRESDRIVTLFTLCHGKVRGLARGARKSMRRFGGALEPFARLSVELVVREGLSSLRGVDIVTVYPRIRQDLAAIGHGGYAVELVDRLLPDGASVPRLFRLLVSYLEHLDQGGASPSDRRFFEANLLNILGYRLSLDACAACGVEFPADAARRAGAAGTVLCTGCGRYGAPLSAETVRLLHRCLGTGRFGAIVFPPEPLGEAGPLLDGAIGAHLARPLNSLAFLRQLTP.

Belongs to the RecO family.

Its function is as follows. Involved in DNA repair and RecF pathway recombination. This Geobacter sulfurreducens (strain ATCC 51573 / DSM 12127 / PCA) protein is DNA repair protein RecO.